The chain runs to 876 residues: Leucine--tRNA ligase (876 aa).

A 'HIGH' region motif is present at residues 42–52 (PYPSGKLHMGH). The short motif at 634-638 (KMSKS) is the 'KMSKS' region element. K637 lines the ATP pocket.

It belongs to the class-I aminoacyl-tRNA synthetase family.

The protein localises to the cytoplasm. The enzyme catalyses tRNA(Leu) + L-leucine + ATP = L-leucyl-tRNA(Leu) + AMP + diphosphate. This chain is Leucine--tRNA ligase, found in Neisseria meningitidis serogroup C (strain 053442).